The primary structure comprises 612 residues: Elongation factor 4 (612 aa).

A tr-type G domain is found at 11–193 (KHIRNFSIIA…RIVTDVPAPS (183 aa)). GTP-binding positions include 23-28 (DHGKST) and 140-143 (NKVD).

This sequence belongs to the TRAFAC class translation factor GTPase superfamily. Classic translation factor GTPase family. LepA subfamily.

Its subcellular location is the cell membrane. It catalyses the reaction GTP + H2O = GDP + phosphate + H(+). Functionally, required for accurate and efficient protein synthesis under certain stress conditions. May act as a fidelity factor of the translation reaction, by catalyzing a one-codon backward translocation of tRNAs on improperly translocated ribosomes. Back-translocation proceeds from a post-translocation (POST) complex to a pre-translocation (PRE) complex, thus giving elongation factor G a second chance to translocate the tRNAs correctly. Binds to ribosomes in a GTP-dependent manner. The protein is Elongation factor 4 of Lacticaseibacillus paracasei (strain ATCC 334 / BCRC 17002 / CCUG 31169 / CIP 107868 / KCTC 3260 / NRRL B-441) (Lactobacillus paracasei).